The chain runs to 512 residues: ATP synthase subunit alpha 2 (512 aa).

169-176 (GDRQTGKT) lines the ATP pocket.

The protein belongs to the ATPase alpha/beta chains family. As to quaternary structure, F-type ATPases have 2 components, CF(1) - the catalytic core - and CF(0) - the membrane proton channel. CF(1) has five subunits: alpha(3), beta(3), gamma(1), delta(1), epsilon(1). CF(0) has four main subunits: a(1), b(1), b'(1) and c(9-12).

It is found in the cell inner membrane. It catalyses the reaction ATP + H2O + 4 H(+)(in) = ADP + phosphate + 5 H(+)(out). Produces ATP from ADP in the presence of a proton gradient across the membrane. The alpha chain is a regulatory subunit. The protein is ATP synthase subunit alpha 2 of Dinoroseobacter shibae (strain DSM 16493 / NCIMB 14021 / DFL 12).